The sequence spans 82 residues: U24 protein (82 aa).

The short motif at 7–10 (PPSY) is the PPXY motif element. Residues 52–72 (FIILACLIISVILCLILILHI) form a helical membrane-spanning segment.

In terms of assembly, interacts with host ITCH; this interaction probably mediates ITCH degradation. Interacts probably with NEDD4.

It localises to the membrane. Functionally, down-regulates of the TCR/CD3E complex and the transferrin receptor TFRC in host T-cells by blocking them from recycling back to the cell surface. This is U24 protein from Homo sapiens (Human).